Consider the following 123-residue polypeptide: Large ribosomal subunit protein bL12 (123 aa).

This sequence belongs to the bacterial ribosomal protein bL12 family. Homodimer. Part of the ribosomal stalk of the 50S ribosomal subunit. Forms a multimeric L10(L12)X complex, where L10 forms an elongated spine to which 2 to 4 L12 dimers bind in a sequential fashion. Binds GTP-bound translation factors.

In terms of biological role, forms part of the ribosomal stalk which helps the ribosome interact with GTP-bound translation factors. Is thus essential for accurate translation. This chain is Large ribosomal subunit protein bL12, found in Bartonella tribocorum (strain CIP 105476 / IBS 506).